The sequence spans 357 residues: N-acetyl-gamma-glutamyl-phosphate reductase (357 aa).

Cys-160 is a catalytic residue.

This sequence belongs to the NAGSA dehydrogenase family. Type 1 subfamily.

Its subcellular location is the cytoplasm. It catalyses the reaction N-acetyl-L-glutamate 5-semialdehyde + phosphate + NADP(+) = N-acetyl-L-glutamyl 5-phosphate + NADPH + H(+). The protein operates within amino-acid biosynthesis; L-arginine biosynthesis; N(2)-acetyl-L-ornithine from L-glutamate: step 3/4. Its function is as follows. Catalyzes the NADPH-dependent reduction of N-acetyl-5-glutamyl phosphate to yield N-acetyl-L-glutamate 5-semialdehyde. This Synechococcus sp. (strain CC9605) protein is N-acetyl-gamma-glutamyl-phosphate reductase.